The following is a 532-amino-acid chain: Flavin-containing monooxygenase 1 (532 aa).

Ala2 is modified (N-acetylalanine). The Lumenal portion of the chain corresponds to 2-510; that stretch reads AKRVAIVGAG…ARVVQESPSP (509 aa). Residues 9-13, Glu32, 40-41, and 61-62 contribute to the FAD site; these read GAGVS, LW, and NS. NADP(+)-binding positions include 60–61 and 195–198; these read SN and SGTD. The helical transmembrane segment at 511-531 threads the bilayer; it reads FESFLKVFSFLALLVAIFLIF. A topological domain (cytoplasmic) is located at residue Leu532.

It belongs to the FMO family. Requires FAD as cofactor. As to expression, expressed mainly in fetal and adult liver.

It localises to the endoplasmic reticulum membrane. The enzyme catalyses hypotaurine + NADPH + O2 + H(+) = taurine + NADP(+) + H2O. The catalysed reaction is hypotaurine + NADH + O2 + H(+) = taurine + NAD(+) + H2O. It catalyses the reaction trimethylamine + NADPH + O2 = trimethylamine N-oxide + NADP(+) + H2O. It carries out the reaction N,N-dimethylaniline + NADPH + O2 + H(+) = N,N-dimethylaniline N-oxide + NADP(+) + H2O. Its function is as follows. Broad spectrum monooxygenase that catalyzes the oxygenation of a wide variety of nitrogen- and sulfur-containing compounds including xenobiotics. Catalyzes the S-oxygenation of hypotaurine to produce taurine, an organic osmolyte involved in cell volume regulation as well as a variety of cytoprotective and developmental processes. In vitro, catalyzes the N-oxygenation of trimethylamine (TMA) to produce trimethylamine N-oxide (TMAO) and could therefore participate to the detoxification of this compound that is generated by the action of gut microbiota from dietary precursors such as choline, choline containing compounds, betaine or L-carnitine. In Homo sapiens (Human), this protein is Flavin-containing monooxygenase 1.